A 218-amino-acid polypeptide reads, in one-letter code: Adenylate kinase (218 aa).

Position 10–15 (10–15 (GAGKGT)) interacts with ATP. Positions 30-59 (STGDMLRAAVKAGTPLGIEAKKVMDSGGLV) are NMP. AMP-binding positions include Thr-31, Arg-36, 57–59 (GLV), 85–88 (GFPR), and Gln-92. The LID stretch occupies residues 122-159 (GRRSHSASGRTYHVKYNPPKVEGLDDVTGEPLIQREDD). ATP is bound by residues Arg-123 and 132–133 (TY). 2 residues coordinate AMP: Arg-156 and Arg-167. Gly-203 contributes to the ATP binding site.

The protein belongs to the adenylate kinase family. Monomer.

The protein localises to the cytoplasm. The catalysed reaction is AMP + ATP = 2 ADP. It functions in the pathway purine metabolism; AMP biosynthesis via salvage pathway; AMP from ADP: step 1/1. In terms of biological role, catalyzes the reversible transfer of the terminal phosphate group between ATP and AMP. Plays an important role in cellular energy homeostasis and in adenine nucleotide metabolism. This is Adenylate kinase from Polaromonas naphthalenivorans (strain CJ2).